Consider the following 448-residue polypeptide: Homogentisate 1,2-dioxygenase (448 aa).

The Proton acceptor role is filled by His303. 2 residues coordinate Fe cation: His346 and Glu352. Homogentisate contacts are provided by Tyr361 and His382. His382 contributes to the Fe cation binding site.

The protein belongs to the homogentisate dioxygenase family. Hexamer; dimer of trimers. Fe cation is required as a cofactor.

The catalysed reaction is homogentisate + O2 = 4-maleylacetoacetate + H(+). It functions in the pathway amino-acid degradation; L-phenylalanine degradation; acetoacetate and fumarate from L-phenylalanine: step 4/6. Involved in the catabolism of homogentisate (2,5-dihydroxyphenylacetate or 2,5-OH-PhAc), a central intermediate in the degradation of phenylalanine and tyrosine. Catalyzes the oxidative ring cleavage of the aromatic ring of homogentisate to yield maleylacetoacetate. This is Homogentisate 1,2-dioxygenase from Rhodopseudomonas palustris (strain BisB5).